Consider the following 903-residue polypeptide: Protein translocase subunit SecA (903 aa).

Residues Q87, 105-109 (GEGKT), and D513 each bind ATP. Basic and acidic residues predominate over residues 840-853 (MEAQRRAQAEEAAR). The disordered stretch occupies residues 840-903 (MEAQRRAQAE…KYKQCHGQIN (64 aa)). Zn(2+)-binding residues include C887, C889, C898, and H899.

This sequence belongs to the SecA family. In terms of assembly, monomer and homodimer. Part of the essential Sec protein translocation apparatus which comprises SecA, SecYEG and auxiliary proteins SecDF-YajC and YidC. Zn(2+) is required as a cofactor.

Its subcellular location is the cell inner membrane. It is found in the cytoplasm. The enzyme catalyses ATP + H2O + cellular proteinSide 1 = ADP + phosphate + cellular proteinSide 2.. Part of the Sec protein translocase complex. Interacts with the SecYEG preprotein conducting channel. Has a central role in coupling the hydrolysis of ATP to the transfer of proteins into and across the cell membrane, serving both as a receptor for the preprotein-SecB complex and as an ATP-driven molecular motor driving the stepwise translocation of polypeptide chains across the membrane. This Vibrio cholerae serotype O1 (strain M66-2) protein is Protein translocase subunit SecA.